The sequence spans 331 residues: Protein C10 (331 aa).

This sequence belongs to the poxviridae C4/C10 protein family.

In Vaccinia virus (strain Copenhagen) (VACV), this protein is Protein C10.